A 214-amino-acid polypeptide reads, in one-letter code: Variable small protein 24 (214 aa).

A signal peptide spans 1-18; sequence MRKRISAIIMTLFMVFMS. Residue cysteine 19 is the site of N-palmitoyl cysteine attachment. A lipid anchor (S-diacylglycerol cysteine) is attached at cysteine 19. The tract at residues 146–172 is disordered; the sequence is TELGKKDASDDDTKKAIKKDNSDKTKG.

It belongs to the variable small protein (Vsp) family.

It localises to the cell outer membrane. Its function is as follows. The Vlp and Vsp proteins are antigenically distinct proteins, only one vlp or vsp gene is transcriptionally active at any one time. Switching between these genes is a mechanism of host immune response evasion. This chain is Variable small protein 24, found in Borrelia hermsii.